A 417-amino-acid chain; its full sequence is UPF0761 membrane protein Veis_3782 (417 aa).

Helical transmembrane passes span 54–74 (ILAL…FPIF), 111–131 (GLGL…ILTI), 151–171 (VLIY…SLAL), 192–212 (FLFD…LYHY), 226–246 (GGLF…LYLG), and 261–281 (LPIL…GAVV).

The protein belongs to the UPF0761 family.

Its subcellular location is the cell inner membrane. The sequence is that of UPF0761 membrane protein Veis_3782 from Verminephrobacter eiseniae (strain EF01-2).